A 225-amino-acid chain; its full sequence is NAD(P)H-quinone oxidoreductase subunit K, chloroplastic (225 aa).

Positions 43, 44, 108, and 139 each coordinate [4Fe-4S] cluster.

This sequence belongs to the complex I 20 kDa subunit family. As to quaternary structure, NDH is composed of at least 16 different subunits, 5 of which are encoded in the nucleus. [4Fe-4S] cluster is required as a cofactor.

The protein resides in the plastid. The protein localises to the chloroplast thylakoid membrane. The enzyme catalyses a plastoquinone + NADH + (n+1) H(+)(in) = a plastoquinol + NAD(+) + n H(+)(out). It carries out the reaction a plastoquinone + NADPH + (n+1) H(+)(in) = a plastoquinol + NADP(+) + n H(+)(out). Functionally, NDH shuttles electrons from NAD(P)H:plastoquinone, via FMN and iron-sulfur (Fe-S) centers, to quinones in the photosynthetic chain and possibly in a chloroplast respiratory chain. The immediate electron acceptor for the enzyme in this species is believed to be plastoquinone. Couples the redox reaction to proton translocation, and thus conserves the redox energy in a proton gradient. The sequence is that of NAD(P)H-quinone oxidoreductase subunit K, chloroplastic from Arabis hirsuta (Hairy rock-cress).